The following is a 325-amino-acid chain: Transcription initiation factor IIB 2 (325 aa).

The segment covering 1–13 has biased composition (polar residues); it reads MSDSTIRTYSSDQ. Residues 1-29 form a disordered region; it reads MSDSTIRTYSSDQRQTDNDETVSTPDEDV. The segment at 28 to 58 adopts a TFIIB-type zinc-finger fold; that stretch reads DVLTCPECGGQVIDDEEHGESVCVDCGLVVE. Zn(2+) contacts are provided by cysteine 32, cysteine 35, cysteine 50, and cysteine 53. A disordered region spans residues 73-93; sequence STEKDEKSRVGAPTTNMMHDK. A run of 2 repeats spans residues 144-227 and 238-319.

It belongs to the TFIIB family.

Functionally, stabilizes TBP binding to an archaeal box-A promoter. Also responsible for recruiting RNA polymerase II to the pre-initiation complex (DNA-TBP-TFIIB). In Halobacterium salinarum (strain ATCC 700922 / JCM 11081 / NRC-1) (Halobacterium halobium), this protein is Transcription initiation factor IIB 2.